The sequence spans 464 residues: 17,18-epoxy-17-hydroxycur-19-ene N-malonyltransferase (464 aa).

Residues H191 and D403 each act as proton acceptor in the active site.

The protein belongs to the plant acyltransferase family. As to quaternary structure, monomer. As to expression, mainly expressed in roots.

Its subcellular location is the cytoplasm. The catalysed reaction is 17,18-epoxy-17-hydroxycur-19-ene + malonyl-CoA = prestrychnine + CoA. It participates in alkaloid biosynthesis. Functionally, malonylransferase involved in the biosynthesis of curare monoterpene indole alkaloids (MIAs), natural products such as strychnine, a neurotoxic compound used as a pesticide to control rodents, and its pharmacologically active derivatives, including brucine, used to regulate blood pressure. Curare alkaloids act as animal glycine receptor antagonists. Catalyzes the conversion of 17,18-epoxy-17-hydroxycur-19-ene (Wieland-Gumlich aldehyde) to prestrychnine, which is spontaneously converted into strychnine and isostrychnine. The polypeptide is 17,18-epoxy-17-hydroxycur-19-ene N-malonyltransferase (Strychnos nux-vomica (Poison nut)).